We begin with the raw amino-acid sequence, 69 residues long: Putative membrane protein insertion efficiency factor (69 aa).

It belongs to the UPF0161 family.

The protein resides in the cell membrane. Its function is as follows. Could be involved in insertion of integral membrane proteins into the membrane. This is Putative membrane protein insertion efficiency factor from Clostridium botulinum (strain Okra / Type B1).